A 622-amino-acid polypeptide reads, in one-letter code: Chaperone protein HscA homolog (622 aa).

The protein belongs to the heat shock protein 70 family.

Chaperone involved in the maturation of iron-sulfur cluster-containing proteins. Has a low intrinsic ATPase activity which is markedly stimulated by HscB. In Verminephrobacter eiseniae (strain EF01-2), this protein is Chaperone protein HscA homolog.